The primary structure comprises 243 residues: VQ motif-containing protein 33 (243 aa).

Residues 1 to 16 (MEVSTSSMSSKPEQMQ) are compositionally biased toward polar residues. The disordered stretch occupies residues 1–49 (MEVSTSSMSSKPEQMQNPPPMISSPRFQPQIISPHHHDQHQHLSNPYPT). The VQ motif lies at 59–68 (FKQVVQMLTG). 2 disordered regions span residues 69 to 98 (SSTD…SIPP) and 138 to 162 (FTGG…SENI). A phosphoserine mark is found at serine 83 and serine 95. The span at 84–98 (PVNNNNKGSSFSIPP) shows a compositional bias: polar residues. Residue threonine 139 is modified to Phosphothreonine. 5 positions are modified to phosphoserine: serine 148, serine 152, serine 165, serine 167, and serine 178. Positions 149 to 162 (PRFSPRNSSSSENI) are enriched in low complexity. The segment at 180 to 243 (VTPLRSNDDP…FPVASPARNS (64 aa)) is disordered. The residue at position 181 (threonine 181) is a Phosphothreonine. Positions 191–201 (NKSSPLSLGNS) are enriched in polar residues. 2 positions are modified to phosphoserine: serine 218 and serine 221. Phosphothreonine is present on threonine 222. Position 238 is a phosphoserine (serine 238).

In terms of processing, phosphorylated on serine and threonine residues by MPK6.

It is found in the nucleus. Its function is as follows. May modulate WRKY transcription factor activities. The polypeptide is VQ motif-containing protein 33 (Arabidopsis thaliana (Mouse-ear cress)).